The primary structure comprises 337 residues: Phenylalanine--tRNA ligase alpha subunit (337 aa).

Glu252 contacts Mg(2+).

The protein belongs to the class-II aminoacyl-tRNA synthetase family. Phe-tRNA synthetase alpha subunit type 1 subfamily. As to quaternary structure, tetramer of two alpha and two beta subunits. It depends on Mg(2+) as a cofactor.

The protein localises to the cytoplasm. The catalysed reaction is tRNA(Phe) + L-phenylalanine + ATP = L-phenylalanyl-tRNA(Phe) + AMP + diphosphate + H(+). The protein is Phenylalanine--tRNA ligase alpha subunit of Francisella tularensis subsp. tularensis (strain SCHU S4 / Schu 4).